We begin with the raw amino-acid sequence, 137 residues long: MTEKVIKTDAEWRAMLDDEEYDVTRHAATEAPFSGRYWDHHEHGIYTCVCCNTPLFASDAKFDSGCGWPSYFTALNPDNVKEKIDRAYGMIRTEVICNVCDAHLGHVFNDGPPPTGLRYCINSASLRFDATPDLNES.

The MsrB domain occupies 9–131; the sequence is DAEWRAMLDD…NSASLRFDAT (123 aa). Zn(2+) is bound by residues Cys48, Cys51, Cys97, and Cys100. Cys120 (nucleophile) is an active-site residue.

This sequence belongs to the MsrB Met sulfoxide reductase family. Requires Zn(2+) as cofactor.

The catalysed reaction is L-methionyl-[protein] + [thioredoxin]-disulfide + H2O = L-methionyl-(R)-S-oxide-[protein] + [thioredoxin]-dithiol. The protein is Peptide methionine sulfoxide reductase MsrB of Herminiimonas arsenicoxydans.